The primary structure comprises 639 residues: ATP-dependent rRNA helicase spb4 (639 aa).

Positions tryptophan 14–alanine 42 match the Q motif motif. The Helicase ATP-binding domain maps to isoleucine 45–isoleucine 249. Position 58-65 (alanine 58–threonine 65) interacts with ATP. The DEAD box motif lies at aspartate 197–aspartate 200. A Helicase C-terminal domain is found at alanine 283–threonine 437. Disordered regions lie at residues arginine 531–glutamate 601 and alanine 620–aspartate 639. A coiled-coil region spans residues glutamine 561 to glutamate 624. Basic and acidic residues predominate over residues lysine 577–glutamate 601.

It belongs to the DEAD box helicase family. DDX55/SPB4 subfamily. As to quaternary structure, component of pre-60S ribosomal complexes.

It localises to the nucleus. It is found in the nucleolus. It carries out the reaction ATP + H2O = ADP + phosphate + H(+). ATP-binding RNA helicase involved in the biogenesis of 60S ribosomal subunits. Binds 90S pre-ribosomal particles and dissociates from pre-60S ribosomal particles after processing of 27SB pre-rRNA. Required for the normal formation of 18S rRNA through the processing of pre-rRNAs at sites A0, A1 and A2, and the normal formation of 25S and 5.8S rRNAs through the processing of pre-rRNAs at sites C1 and C2. This Aspergillus clavatus (strain ATCC 1007 / CBS 513.65 / DSM 816 / NCTC 3887 / NRRL 1 / QM 1276 / 107) protein is ATP-dependent rRNA helicase spb4.